Here is a 1088-residue protein sequence, read N- to C-terminus: Insulin receptor substrate 1-B (1088 aa).

The PH domain maps to 15-117; the sequence is DVRKVGYLRK…WYQALVDLHN (103 aa). Tyr-48 carries the post-translational modification Phosphotyrosine. One can recognise an IRS-type PTB domain in the interval 155–259; it reads FKEVWQVIMK…EAMKALSDEF (105 aa). Residues 259–428 are disordered; it reads FRPRSKSQSS…GGFISSDEYG (170 aa). Composition is skewed to low complexity over residues 264–278, 302–312, 379–400, and 408–420; these read KSQS…ISVP, SATATSPAGGA, SPSA…GSTS, and SSAS…SDGG. Residue Ser-307 is modified to Phosphoserine. Tyr-460 bears the Phosphotyrosine; by INSR mark. The short motif at 460-463 is the YXXM motif 1 element; sequence YICM. Polar residues-rich tracts occupy residues 466 to 479 and 499 to 516; these read SSSH…QRYQ and SSGT…PSQS. 2 disordered regions span residues 466 to 485 and 496 to 516; these read SSSH…RGEE and RTHS…PSQS. 5 consecutive short sequence motifs (YXXM motif) follow at residues 521–524, 567–570, 584–587, 612–615, and 654–657; these read YTEM, YMPM, YMMM, and YINM. Tyr-567 and Tyr-584 each carry phosphotyrosine; by INSR. Tyr-612 bears the Phosphotyrosine mark. The segment at 704 to 785 is disordered; the sequence is NLRISANSGH…PPEPKSPGEY (82 aa). Positions 707–718 are enriched in polar residues; the sequence is ISANSGHNLYTE. Residues 719–729 show a composition bias toward low complexity; it reads DSSSSSTSSDS. Residues Tyr-785 and Tyr-823 each carry the phosphotyrosine; by INSR modification. Residues 785 to 787 form a GRB2-binding region; that stretch reads YVN. Residues 823–826 carry the YXXM motif 7 motif; that stretch reads YMNM. Over residues 840-863 the composition is skewed to polar residues; sequence TSSYEPPNKPVNSVCPTETCSSSR. Positions 840–868 are disordered; the sequence is TSSYEPPNKPVNSVCPTETCSSSRPPIRG. At Tyr-875 the chain carries Phosphotyrosine; by INSR. Short sequence motifs (YXXM motif) lie at residues 875–878 and 909–912; these read YMSM and YAEM. A disordered region spans residues 935–1006; that stretch reads ASRSSLLGQG…SGEDVKRHSS (72 aa). Composition is skewed to polar residues over residues 946–961 and 980–995; these read GPSA…NRNP and ETFS…TTGP. 2 positions are modified to phosphotyrosine; by INSR: Tyr-1037 and Tyr-1069.

Interacts with the NPXY motif of tyrosine-phosphorylated igf1r and insr via the PTB domain. Binds to phosphatidylinositol 3-kinase p85 subunit at a low level in vitro prior to phosphorylation. Binding is greatly enhanced following tyrosine phosphorylation by insr and probably occurs via the phosphorylated YXXM motifs. In terms of processing, phosphorylation of Tyr-785 is required for grb2-binding.

In terms of biological role, may mediate the control of various cellular processes by insulin. When phosphorylated by the insulin receptor binds specifically to various cellular proteins containing SH2 domains such as phosphatidylinositol 3-kinase p85 subunit or grb2. Activates phosphatidylinositol 3-kinase when bound to the regulatory p85 subunit. This is Insulin receptor substrate 1-B (irs1-b) from Xenopus laevis (African clawed frog).